The chain runs to 384 residues: MELEGLWWKGQLAVDIHQTLRYKELKLPSYKGQSPQLNLRRYFADLIAIVSNRFKLCPTARHLAVYLLDLFMDRYDISIQQLHIVALSCLLLASKFEDKEDRVPKLEQLNSLGCMTNMNLVLTKQNLLHMELLLLETFEWNLCLPTPAHFIEYYLSIAVHDTDLHDGWPMICLEKTKIYMAKYADYFLEVSLQDHMFLNYGPSLVAAACVAASRIILRLSPSWPTRLHRLTVYAWDILVPCIERLLIAHDNDVKEASKHKNHLSHTAAQCLFPPASPAPPQAHVQQHMPPYLQSQHHQLQFHHSAPQPQNCQPIITAAHASAFPLQTCASAIPTSIQARGHIQTTASVSLAAVPIEVKPCIGVSYNRSYQVNGHYSRLTQCFDR.

The region spanning 15-143 (DIHQTLRYKE…LLETFEWNLC (129 aa)) is the Cyclin N-terminal domain.

The protein belongs to the cyclin family. Cyclin J subfamily.

This chain is Cyclin-J (ccnj), found in Xenopus laevis (African clawed frog).